Reading from the N-terminus, the 277-residue chain is Putative endonuclease (277 aa).

In terms of biological role, putative endonuclease. This Escherichia coli (Enterobacteria phage T5) protein is Putative endonuclease.